A 162-amino-acid chain; its full sequence is Phosphopantetheine adenylyltransferase (162 aa).

S11 lines the substrate pocket. ATP-binding positions include 11–12 and H19; that span reads SF. 3 residues coordinate substrate: K43, V76, and R90. Residues 91–93, E101, and 126–132 contribute to the ATP site; these read GLR and HLYISSS.

The protein belongs to the bacterial CoaD family. In terms of assembly, homohexamer. Mg(2+) is required as a cofactor.

The protein localises to the cytoplasm. It carries out the reaction (R)-4'-phosphopantetheine + ATP + H(+) = 3'-dephospho-CoA + diphosphate. It participates in cofactor biosynthesis; coenzyme A biosynthesis; CoA from (R)-pantothenate: step 4/5. Its function is as follows. Reversibly transfers an adenylyl group from ATP to 4'-phosphopantetheine, yielding dephospho-CoA (dPCoA) and pyrophosphate. This is Phosphopantetheine adenylyltransferase from Streptococcus pneumoniae (strain 70585).